Reading from the N-terminus, the 67-residue chain is uncharacterized protein (67 aa).

This is an uncharacterized protein from Haloarcula hispanica (His1V).